Consider the following 736-residue polypeptide: Prolyl 3-hydroxylase 3 (736 aa).

The signal sequence occupies residues 1-20 (MLRLLRPLLLLLLLPPPGSP). TPR repeat units lie at residues 37 to 70 (PDLLYADGLRAYAAGAWAPAVALLREALRSQAAL), 154 to 187 (REPYNYLQRAYYQLKKLDLAAAAAHTFFVANPMH), and 216 to 249 (HWAAYDTGLELLGRQEAGLALPRLEEALQGSLAQ). The segment at 253 to 275 (CRADCEGPEEQQGAEEEEDGAAS) is disordered. Over residues 258-272 (EGPEEQQGAEEEEDG) the composition is skewed to acidic residues. A TPR 4 repeat occupies 316–349 (PNQLRRLHEAHAQVGNLSQAIENVLSVLLFYPED). 2 N-linked (GlcNAc...) asparagine glycosylation sites follow: Asn331 and Asn462. The 115-residue stretch at 561 to 675 (THLVCRSAIE…RCALALWHTW (115 aa)) folds into the Fe2OG dioxygenase domain. 3 residues coordinate Fe cation: His584, Asp586, and His656. The active site involves Arg666. The stretch at 681-709 (EQEWIEAKELLQESQEEEEEEEEEMPSKD) forms a coiled coil. A disordered region spans residues 689–736 (ELLQESQEEEEEEEEEMPSKDPSPEPPSRRHQRVQDKTGRAPRVREEL). Acidic residues predominate over residues 694-704 (SQEEEEEEEEE). A compositionally biased stretch (basic and acidic residues) spans 721–736 (RVQDKTGRAPRVREEL). A Prevents secretion from ER motif is present at residues 733-736 (REEL).

This sequence belongs to the leprecan family. As to quaternary structure, identified in a complex with PLOD1 and P3H4. The cofactor is Fe cation. It depends on L-ascorbate as a cofactor. As to expression, detected in fetal cartilage (at protein level). Weak expression in heart, lung, ovary and skeletal muscle.

The protein resides in the endoplasmic reticulum. The enzyme catalyses L-prolyl-[collagen] + 2-oxoglutarate + O2 = trans-3-hydroxy-L-prolyl-[collagen] + succinate + CO2. Functionally, part of a complex composed of PLOD1, P3H3 and P3H4 that catalyzes hydroxylation of lysine residues in collagen alpha chains and is required for normal assembly and cross-linkling of collagen fibrils. Required for normal hydroxylation of lysine residues in type I collagen chains in skin, bone, tendon, aorta and cornea. Required for normal skin stability via its role in hydroxylation of lysine residues in collagen alpha chains and in collagen fibril assembly. Apparently not required for normal prolyl 3-hydroxylation on collagen chains, possibly because it functions redundantly with other prolyl 3-hydroxylases. The sequence is that of Prolyl 3-hydroxylase 3 from Homo sapiens (Human).